Consider the following 634-residue polypeptide: Chaperone protein HtpG (634 aa).

Positions 1 to 344 (MSETATQNKE…SNDLPLNVSR (344 aa)) are a; substrate-binding. Positions 345-561 (EILQDNKVTQ…DFEMGTQMAK (217 aa)) are b. A c region spans residues 562 to 634 (LLEAAGQAAP…GAINELLTKR (73 aa)).

The protein belongs to the heat shock protein 90 family. In terms of assembly, homodimer.

The protein resides in the cytoplasm. Functionally, molecular chaperone. Has ATPase activity. The chain is Chaperone protein HtpG from Vibrio atlanticus (strain LGP32) (Vibrio splendidus (strain Mel32)).